The sequence spans 626 residues: Forkhead box protein O1 (626 aa).

Residues 1-11 (MAEAPLPPPPG) are compositionally biased toward pro residues. 4 disordered regions span residues 1-57 (MAEA…PAAG), 90-142 (DIRQ…SRRN), 218-319 (SSWW…MPEQ), and 484-519 (PTYGSQPTHNKMSSHPHSHQPPPNHPSVNGRTMTHN). 2 stretches are compositionally biased toward low complexity: residues 37 to 48 (NPSSSANSSPAP) and 101 to 133 (QHPQQQAGTLCAPSVPSALSPASSPSPLGAQQP). The segment at residues 144–238 (WGNLSYADLI…KNGKSPRRRA (95 aa)) is a DNA-binding region (fork-head). Residues 248-259 (AKSRGRAAKKKA) show a composition bias toward basic residues. The span at 262-277 (QSSQDGSSDSPGSQFS) shows a compositional bias: low complexity. Polar residues-rich tracts occupy residues 298–310 (RPRTSSNASTISG) and 484–494 (PTYGSQPTHNK).

Phosphorylated by AKT1; insulin-induced. Post-translationally, IGF1 rapidly induces phosphorylation of Thr-28, Ser-240 and Ser-303. Phosphorylation of Ser-240 decreases DNA-binding activity and promotes the phosphorylation of Thr-28, and Ser-303, which leads to nuclear exclusion and loss of function. Phosphorylation of Ser-313 is independent of IGF1 and leads to reduced function.

Its subcellular location is the cytoplasm. The protein resides in the nucleus. In terms of biological role, transcription factor that regulates metabolic homeostasis in response to oxidative stress. Binds to the consensus sequence 5'-TT[G/A]TTTTG-3' and the related Daf-16 family binding element (DBE) with consensus sequence 5'-TT[G/A]TTTAC-3'. Main regulator of redox balance and osteoblast numbers and controls bone mass. Orchestrates the endocrine function of the skeleton in regulating glucose metabolism. Also acts as a key regulator of chondrogenic commitment of skeletal progenitor cells in response to lipid availability: when lipids levels are low, translocates to the nucleus and promotes expression of sox9, which induces chondrogenic commitment and suppresses fatty acid oxidation. Acts synergistically with atf4 to suppress osteocalcin/bglap activity, increasing glucose levels and triggering glucose intolerance and insulin insensitivity. Also suppresses the transcriptional activity of runx2, an upstream activator of osteocalcin/bglap. May act as a positive regulator of apoptosis in cardiac smooth muscle cells as a result of its transcriptional activation of pro-apoptotic genes. This is Forkhead box protein O1 from Xenopus tropicalis (Western clawed frog).